The sequence spans 119 residues: Integration host factor subunit alpha (119 aa).

The tract at residues 96 to 119 is disordered; it reads INGQQGSGKMNGEASHEQLSAEPE.

This sequence belongs to the bacterial histone-like protein family. Heterodimer of an alpha and a beta chain.

In terms of biological role, this protein is one of the two subunits of integration host factor, a specific DNA-binding protein that functions in genetic recombination as well as in transcriptional and translational control. The protein is Integration host factor subunit alpha of Bradyrhizobium sp. (strain BTAi1 / ATCC BAA-1182).